Here is a 1541-residue protein sequence, read N- to C-terminus: MHHHHPPLPITGASGSTAVGTGAAAAEDASPAANSGPAPISTSTTPSGSNSQQHQRRRKKRANYNYNGIRTVEVRRGYNGFGFTISGQQPCRLSCIISSSPAEQAGLRSGDFLISVNGLNVSKLPHETVVQLIGNSFGSIRMQIAENYYSDSSDEENAHATLRGQLLAASLRHKPRFLHHKAKLHRLRNSPQKKLNPPEAVEPHKSKSSPDHPTLKPVLEDPPLTANLSKAADVANVSAMVRAVGSAALECRVIVGYLGTIEMPKQISHSSKLQTVRSCIRKLRQEKRQPTIVLMCITPDSLSLQSSSGGVLATYSSARLNFVSSSSESENRFFGLVTSAVHNTQIEEEYEPSAGSAAAAGHISISHSCHVFVIDTKLIEHAQHLQRAHEFRLQCTRDPISNLCLEFPNNSEYVVNLVRSMYTMRILPPASRSHQADYEAGAGAAAAGGAVAAAHSPQPSNHSEISTTTSNSDSGIGFNNDCTNISDRILVVDFLAAGAGAAAAAHAGPPTYPAPARPLGIVGIPDNRLTVRAMPDHSALLRSPPASSSLRRPNLLASFNLIQSPATNLTSTRSCDDVLNLFVDDSPRTLAAVASMDDISLHSAAPSLDEGHTFAHPACVPRKMRRSLALETPTTPHKLSAQVFGQPGSRHSLGFEAIDSVQSSVSGACMDQTMDTWASLQNLHKSHKDRTSMSASSSSHCLLEATNSEPDLGNRALPANASPFRRAWGQSSFRTPRSDKVAKEQQQLGQSSPVRRTASMNASDNDMYIKTLMLDSDLKSSRSQHQLSLLQVPKVLTTPAPPSAITASVAAEGAAQDHGCPSSWAGSFERMLQDAAGMQTFSEFLKKEFSAENIYFWTACERYRLLESEADRVAQAREIFAKHLANNSSDPVNVDSQARSLTEEKLADAAPDIFAPAQKQIFSLMKFDSYQRFIRSDLYKSCVEAEQKNQPLPYSGLDLDELLKTNFHLGAFSKLKKSASNAEDRRRKSLLPWHRKTRSKSRDRTEIMADMQHALMPAPPVPQNAPLTSASLKLVCGQNSLSDLHSSRSSLSSFDAGTATGGQGASTESVYSLCRVILTDGATTIVQTRPGETVGELVERLLEKRNLVYPYYDIVFQGSTKSIDVQQPSQILAGKEVVIERRVAFKLDLPDPKVISVKSKPKKQLHEVIRPILSKYNYKMEQVQVIMRDTQVPIDLNQPVTMADGQRLRIVMVNSDFQVGGGSSMPPKQSKPMKPLPQGHLDELTNKVFNELLASKADAAASEKSRPVDLCSMKSNEAPSETSSLFERMRRQQRDGGNIPASKLPKLKKKSTSSSQQSEEAATTQAVADPKKPIIAKLKAGVKLQVTERVAEHQDELLEGLKRAQLARLEDQRGTEINFDLPDFLKNKENLSAAVSKLRKVRASLSPVSKVPATPTEIPQPAPRLSITRSQQPVSPMKVDQEPETDLPAATQDQTEFAKAPPPLPPKPKVLPIKPSNWGVAQPTGNYCNKYSPSKQVPTSPKEASKPGTFASKIPLDLGRKSLEEAGSRCAYLDEPSSSFV.

A disordered region spans residues methionine 1–tyrosine 66. Residues threonine 11–glycine 36 show a composition bias toward low complexity. Positions isoleucine 40–glutamine 53 are enriched in polar residues. Positions threonine 71–tyrosine 148 constitute a PDZ domain. The tract at residues alanine 182 to proline 222 is disordered. Over residues valine 201–threonine 214 the composition is skewed to basic and acidic residues. A PID domain is found at alanine 247 to threonine 423. Disordered regions lie at residues glycine 449 to aspartate 473 and serine 708 to asparagine 761. Polar residues-rich tracts occupy residues proline 457–aspartate 473 and glutamate 744–asparagine 761. An RGS domain is found at serine 827–valine 943. The tract at residues serine 978–arginine 1004 is disordered. The segment covering arginine 987–serine 999 has biased composition (basic residues). 2 RBD domains span residues serine 1072–arginine 1142 and valine 1143–valine 1213. Residues aspartate 1258–valine 1327 form a disordered region. Over residues methionine 1273–leucine 1285 the composition is skewed to polar residues. The span at threonine 1312 to glutamine 1325 shows a compositional bias: low complexity. Residues glutamine 1354–glutamate 1376 enclose the GoLoco domain. Positions lysine 1410 to lysine 1513 are disordered. A compositionally biased stretch (pro residues) spans alanine 1460–lysine 1469. Polar residues predominate over residues proline 1483–threonine 1499.

In terms of assembly, interacts (via GoLoco and RGS domains) with Galphai (via GDP- or GTP-bound forms). Expressed in surface and longitudinal glial cells, gut and heart (at protein level).

The protein localises to the cytoplasm. It is found in the cell membrane. The protein resides in the apical cell membrane. Its function is as follows. Acts as a regulator of G protein signaling (RGS). Modulates G protein alpha subunits nucleotide exchange and hydrolysis activities by functioning either as a GTPase-activating protein (GAP), thereby driving G protein alpha subunits into their inactive GDP-bound form, or as a GDP-dissociation inhibitor (GDI). Confers GDI and GAP activities on G(i) alpha subunit Galphai. Confers GAP activity on G(o)-alpha subunit Galphao and G(i) alpha subunit Galphai. Involved in the dorsal-ventral axis formation of the egg. Acts as a G-protein signaling for glial cell differentiation during embryogenesis; Galphai, Galphao and the G-protein coupled receptor, moody, are required in the surface glia to achieve effective insulation of the nerve cord. May be essential for nurse cell dumping during oogenesis. Required in neuroblast asymmetrical cell division. Plays a role in stress resistance and life span control. The chain is Regulator of G-protein signaling loco (loco) from Drosophila melanogaster (Fruit fly).